The following is a 92-amino-acid chain: MLMNLQFFSHHKGGGSTANGRDSAGRRLGAKRADGQTVKNGNILYRQRGTHIYPGVNVGRGGDDTLFAMADGVVRFERKGRDKRQVSVYPAK.

A propeptide spanning residues 1-8 (MLMNLQFF) is cleaved from the precursor. Residues 11–30 (HKGGGSTANGRDSAGRRLGA) are disordered.

The protein belongs to the bacterial ribosomal protein bL27 family. The N-terminus is cleaved by ribosomal processing cysteine protease Prp.

This chain is Large ribosomal subunit protein bL27, found in Lactiplantibacillus plantarum (strain ATCC BAA-793 / NCIMB 8826 / WCFS1) (Lactobacillus plantarum).